A 302-amino-acid chain; its full sequence is Aquaporin NIP3-1 (302 aa).

The interval 1-31 is disordered; it reads MEPGSTPPNGSAPATPGTPAPLFSSGGPRVD. Residues 7–21 are compositionally biased toward low complexity; sequence PPNGSAPATPGTPAP. 2 helical membrane passes run 76–96 and 102–122; these read LGAEFVGTFILIFFATAAPIV and GAISPFGNAACAGLAVATVIL. The NPA 1 motif lies at 133-135; it reads NPS. Transmembrane regions (helical) follow at residues 149–169, 193–213, and 217–237; these read LQVPAYVAVQALASVCAAFAL, AFFTEFIISFNLLFVVTAVAT, and AVGELAGIAVGAAVTLNILVA. Residues 246 to 248 carry the NPA 2 motif; the sequence is NPV. A helical transmembrane segment spans residues 264–284; sequence WIYLLAPTLGALAGASVYKAV.

It belongs to the MIP/aquaporin (TC 1.A.8) family. NIP (TC 1.A.8.12) subfamily.

The protein localises to the membrane. Its function is as follows. Aquaporins facilitate the transport of water and small neutral solutes across cell membranes. The protein is Aquaporin NIP3-1 (NIP3-1) of Zea mays (Maize).